The chain runs to 492 residues: uncharacterized protein (492 aa).

The helical transmembrane segment at Y30 to M46 threads the bilayer. The J domain occupies N144–G210.

It is found in the membrane. This is an uncharacterized protein from Plasmodium falciparum (isolate 3D7).